Here is a 219-residue protein sequence, read N- to C-terminus: Ribose-5-phosphate isomerase A (219 aa).

Substrate-binding positions include Ser28–Thr31, Asp81–Asp84, and Lys94–Gly97. Glu103 (proton acceptor) is an active-site residue. Residue Lys121 participates in substrate binding.

Belongs to the ribose 5-phosphate isomerase family. As to quaternary structure, homodimer.

The enzyme catalyses aldehydo-D-ribose 5-phosphate = D-ribulose 5-phosphate. It functions in the pathway carbohydrate degradation; pentose phosphate pathway; D-ribose 5-phosphate from D-ribulose 5-phosphate (non-oxidative stage): step 1/1. Functionally, catalyzes the reversible conversion of ribose-5-phosphate to ribulose 5-phosphate. The protein is Ribose-5-phosphate isomerase A of Pasteurella multocida (strain Pm70).